Here is a 293-residue protein sequence, read N- to C-terminus: 33 kDa chaperonin (293 aa).

2 disulfide bridges follow: C230-C232 and C263-C266.

This sequence belongs to the HSP33 family. Under oxidizing conditions two disulfide bonds are formed involving the reactive cysteines. Under reducing conditions zinc is bound to the reactive cysteines and the protein is inactive.

The protein localises to the cytoplasm. Functionally, redox regulated molecular chaperone. Protects both thermally unfolding and oxidatively damaged proteins from irreversible aggregation. Plays an important role in the bacterial defense system toward oxidative stress. This chain is 33 kDa chaperonin, found in Edwardsiella ictaluri (strain 93-146).